Reading from the N-terminus, the 145-residue chain is D-aminoacyl-tRNA deacylase (145 aa).

The Gly-cisPro motif, important for rejection of L-amino acids motif lies at 137 to 138 (GP).

This sequence belongs to the DTD family. Homodimer.

The protein resides in the cytoplasm. The catalysed reaction is glycyl-tRNA(Ala) + H2O = tRNA(Ala) + glycine + H(+). The enzyme catalyses a D-aminoacyl-tRNA + H2O = a tRNA + a D-alpha-amino acid + H(+). Functionally, an aminoacyl-tRNA editing enzyme that deacylates mischarged D-aminoacyl-tRNAs. Also deacylates mischarged glycyl-tRNA(Ala), protecting cells against glycine mischarging by AlaRS. Acts via tRNA-based rather than protein-based catalysis; rejects L-amino acids rather than detecting D-amino acids in the active site. By recycling D-aminoacyl-tRNA to D-amino acids and free tRNA molecules, this enzyme counteracts the toxicity associated with the formation of D-aminoacyl-tRNA entities in vivo and helps enforce protein L-homochirality. The chain is D-aminoacyl-tRNA deacylase from Francisella tularensis subsp. novicida (strain U112).